The sequence spans 245 residues: 3-deoxy-manno-octulosonate cytidylyltransferase (245 aa).

Belongs to the KdsB family.

Its subcellular location is the cytoplasm. It catalyses the reaction 3-deoxy-alpha-D-manno-oct-2-ulosonate + CTP = CMP-3-deoxy-beta-D-manno-octulosonate + diphosphate. It participates in nucleotide-sugar biosynthesis; CMP-3-deoxy-D-manno-octulosonate biosynthesis; CMP-3-deoxy-D-manno-octulosonate from 3-deoxy-D-manno-octulosonate and CTP: step 1/1. The protein operates within bacterial outer membrane biogenesis; lipopolysaccharide biosynthesis. Its function is as follows. Activates KDO (a required 8-carbon sugar) for incorporation into bacterial lipopolysaccharide in Gram-negative bacteria. The chain is 3-deoxy-manno-octulosonate cytidylyltransferase from Rhodopseudomonas palustris (strain TIE-1).